Consider the following 290-residue polypeptide: TIP41-like protein (290 aa).

This sequence belongs to the TIP41 family. In terms of assembly, interacts with TAP46. As to expression, widely expressed.

In terms of biological role, may be involved in the regulation of the TOR signaling pathway. Indirectly activates the PP2A phosphatase via interaction with its suppressor TAP46. Could play a role in cytoskeleton functions. This Arabidopsis thaliana (Mouse-ear cress) protein is TIP41-like protein.